The sequence spans 475 residues: UDP-N-acetylmuramate--L-alanine ligase (475 aa).

An ATP-binding site is contributed by 125–131 (GTHGKTT).

It belongs to the MurCDEF family.

It localises to the cytoplasm. It carries out the reaction UDP-N-acetyl-alpha-D-muramate + L-alanine + ATP = UDP-N-acetyl-alpha-D-muramoyl-L-alanine + ADP + phosphate + H(+). The protein operates within cell wall biogenesis; peptidoglycan biosynthesis. In terms of biological role, cell wall formation. This Glaesserella parasuis serovar 5 (strain SH0165) (Haemophilus parasuis) protein is UDP-N-acetylmuramate--L-alanine ligase.